The following is a 435-amino-acid chain: Transforming growth factor beta-2 proprotein (435 aa).

Residues 1-20 (MHYCVLSAFLLLHLVTVALS) form the signal peptide. N-linked (GlcNAc...) asparagine glycosylation is found at asparagine 72, asparagine 140, and asparagine 241. 4 disulfide bridges follow: cysteine 309/cysteine 318, cysteine 317/cysteine 380, cysteine 346/cysteine 411, and cysteine 350/cysteine 413.

This sequence belongs to the TGF-beta family. Interacts with the serine proteases, HTRA1 and HTRA3. Interacts with ASPN. Interacts with MFAP5. As to quaternary structure, interacts with Transforming growth factor beta-2 (TGF-beta-2) chain; interaction is non-covalent and maintains (TGF-beta-2) in a latent state. Interacts with LRRC32/GARP; leading to regulate activation of TGF-beta-2. Interacts with NREP; the interaction results in a decrease in TGFB2 autoinduction. In terms of assembly, transforming growth factor beta-2: Homodimer; disulfide-linked. Transforming growth factor beta-2: Interacts with TGF-beta receptors (TGFBR1 and TGFBR2), leading to signal transduction. In terms of processing, the precursor proprotein is cleaved in the Golgi apparatus to form Transforming growth factor beta-2 (TGF-beta-2) and Latency-associated peptide (LAP) chains, which remain non-covalently linked, rendering TGF-beta-2 inactive.

The protein localises to the secreted. Its subcellular location is the extracellular space. The protein resides in the extracellular matrix. Precursor of the Latency-associated peptide (LAP) and Transforming growth factor beta-2 (TGF-beta-2) chains, which constitute the regulatory and active subunit of TGF-beta-2, respectively. Functionally, required to maintain the Transforming growth factor beta-2 (TGF-beta-2) chain in a latent state during storage in extracellular matrix. Associates non-covalently with TGF-beta-2 and regulates its activation via interaction with 'milieu molecules', such as LTBP1 and LRRC32/GARP, that control activation of TGF-beta-2. In terms of biological role, multifunctional protein that regulates various processes such as angiogenesis and heart development. Activation into mature form follows different steps: following cleavage of the proprotein in the Golgi apparatus, Latency-associated peptide (LAP) and Transforming growth factor beta-2 (TGF-beta-2) chains remain non-covalently linked rendering TGF-beta-2 inactive during storage in extracellular matrix. At the same time, LAP chain interacts with 'milieu molecules', such as LTBP1 and LRRC32/GARP, that control activation of TGF-beta-2 and maintain it in a latent state during storage in extracellular milieus. Once activated following release of LAP, TGF-beta-2 acts by binding to TGF-beta receptors (TGFBR1 and TGFBR2), which transduce signal. This chain is Transforming growth factor beta-2 proprotein (TGFB2), found in Sus scrofa (Pig).